Reading from the N-terminus, the 506-residue chain is Dipeptide and tripeptide permease A (506 aa).

The Cytoplasmic portion of the chain corresponds to 1 to 36; it reads MSTANNNSEHPESVSLNAFKQPKAFYLIFSIELWER. A helical transmembrane segment spans residues 37-57; it reads FGYYGLQGIMAVYLVKMLGLS. Residues 58–61 are Periplasmic-facing; the sequence is EADS. Residues 62-82 form a helical membrane-spanning segment; the sequence is ITLFSSFSALVYGFVAIGGWL. At 83 to 91 the chain is on the cytoplasmic side; it reads GDKVLGSKR. A run of 2 helical transmembrane segments spans residues 92-112 and 113-133; these read VIVL…YSGH and EIFW…LFKA. At 134 to 155 the chain is on the cytoplasmic side; the sequence is NPSSLLSTCYEKDDPRLDGAFT. A helical membrane pass occupies residues 156 to 176; it reads MYYMSVNIGSFLSMLATPWLA. The Periplasmic portion of the chain corresponds to 177–180; sequence AKYG. Residues 181 to 201 traverse the membrane as a helical segment; that stretch reads WSVAFSLSVVGMLITLVNFMV. The Cytoplasmic portion of the chain corresponds to 202-222; the sequence is CHKWVKQHGSKPDFKPLQVKK. The chain crosses the membrane as a helical span at residues 223–243; it reads LLMVLVGVVALVALSSWLLHN. The Periplasmic segment spans residues 244 to 248; it reads QIIAR. The helical transmembrane segment at 249-269 threads the bilayer; it reads WALAIVSIGIVIVFAKETFAL. Residues 270-276 are Cytoplasmic-facing; that stretch reads HGAARRK. Residues 277 to 297 form a helical membrane-spanning segment; that stretch reads MIVAFLLMLEAVVFFVLYSQM. The Periplasmic portion of the chain corresponds to 298-322; that stretch reads PTSLNFFAIHNVEHNILGLAFEPEQ. The helical transmembrane segment at 323–343 threads the bilayer; that stretch reads YQALNPFWIMLASPILAALYN. Residues 344–354 are Cytoplasmic-facing; it reads KMGDRLPMPHK. The chain crosses the membrane as a helical span at residues 355–375; that stretch reads FAFGMILCSGAFLVLPWGASF. The Periplasmic portion of the chain corresponds to 376 to 385; the sequence is ANEQGIVSVN. A helical membrane pass occupies residues 386–406; it reads WLILSYALQSIGELMISGLGL. Topologically, residues 407 to 416 are cytoplasmic; it reads AMVAQLVPQR. Residues 417 to 437 traverse the membrane as a helical segment; sequence LMGFIMGSWFLTTAAAALIAG. At 438-461 the chain is on the periplasmic side; sequence KVAGLTAVPGDVNDAHASLAIYSH. Residues 462–482 traverse the membrane as a helical segment; that stretch reads VFMQIGIATAVIAILMMLTAP. Over 483–506 the chain is Cytoplasmic; it reads KLHRMTLDTAEDTEKKAQAAAITN.

The protein belongs to the major facilitator superfamily. Proton-dependent oligopeptide transporter (POT/PTR) (TC 2.A.17) family. DtpA subfamily.

It is found in the cell inner membrane. Proton-dependent permease that transports di- and tripeptides. This is Dipeptide and tripeptide permease A from Serratia proteamaculans (strain 568).